The sequence spans 645 residues: 1,4-alpha-glucan branching enzyme GlgB (645 aa).

D309 serves as the catalytic Nucleophile. Residue E352 is the Proton donor of the active site. Residues V619–R645 are disordered. Residues R636 to R645 are compositionally biased toward polar residues.

This sequence belongs to the glycosyl hydrolase 13 family. GlgB subfamily. As to quaternary structure, monomer.

It carries out the reaction Transfers a segment of a (1-&gt;4)-alpha-D-glucan chain to a primary hydroxy group in a similar glucan chain.. Its pathway is glycan biosynthesis; glycogen biosynthesis. Its function is as follows. Catalyzes the formation of the alpha-1,6-glucosidic linkages in glycogen by scission of a 1,4-alpha-linked oligosaccharide from growing alpha-1,4-glucan chains and the subsequent attachment of the oligosaccharide to the alpha-1,6 position. This Bacillus cereus (strain AH187) protein is 1,4-alpha-glucan branching enzyme GlgB.